A 357-amino-acid polypeptide reads, in one-letter code: UPF0283 membrane protein BAbS19_I09770 (357 aa).

Residues 1-36 (MSDKTPRKPTAFRLEQPARVSAASEQEEPRRPRAVK) are disordered. The segment covering 27-36 (EEPRRPRAVK) has biased composition (basic and acidic residues). 2 helical membrane-spanning segments follow: residues 78 to 98 (ILFGALGILVSFAIGIWTEDL) and 109 to 129 (LGWTALGVAMVALAAFAAIIL).

The protein belongs to the UPF0283 family.

It localises to the cell inner membrane. The protein is UPF0283 membrane protein BAbS19_I09770 of Brucella abortus (strain S19).